The chain runs to 480 residues: uncharacterized protein (480 aa).

Lys222 is subject to N6-(pyridoxal phosphate)lysine.

This sequence belongs to the Orn/Lys/Arg decarboxylase class-I family. Requires pyridoxal 5'-phosphate as cofactor.

This is an uncharacterized protein from Bacillus subtilis (strain 168).